A 106-amino-acid chain; its full sequence is Small ribosomal subunit protein uS10 (106 aa).

It belongs to the universal ribosomal protein uS10 family. In terms of assembly, part of the 30S ribosomal subunit.

Functionally, involved in the binding of tRNA to the ribosomes. The polypeptide is Small ribosomal subunit protein uS10 (Prochlorococcus marinus (strain MIT 9515)).